The sequence spans 475 residues: BTB/POZ domain-containing protein 10 (475 aa).

Residues 1-143 (MAGRPHPYDG…SSQSSSDGSC (143 aa)) are disordered. The segment covering 22 to 31 (LHSRPRKLYK) has biased composition (basic residues). Basic and acidic residues predominate over residues 57–80 (GHERSRDRRRSSDRSRDSSHERTE). The segment covering 81–94 (SQLTPCIRNVTSPT) has biased composition (polar residues). The segment covering 97–107 (HHVEREKDHSS) has biased composition (basic and acidic residues). Positions 108 to 142 (SRPSSPRPQKASPNGSISSAGNSSRNSSQSSSDGS) are enriched in low complexity. The tract at residues 146–475 (AGEMVFVYEN…LDPDAQNPML (330 aa)) is interaction with AKT family members. Residues 167 to 241 (ERVTLIVDNT…YKTGIIRCPD (75 aa)) enclose the BTB domain. The segment at 455 to 475 (LPIHPPSGNSDLDPDAQNPML) is disordered.

Interacts (via C-terminal 330-amino-acid region) with AKT1; AKT2 and AKT3. Interacts with PPP2CA and PPP1CA. In terms of tissue distribution, ubiquitously expressed. Highly expressed in adult brain, testis, aorta and small intestine and weakly expressed in the heart, lung, liver, kidney, pancreas, spleen, thymus, prostate, ovary and colon. Down-regulated in glioma.

It is found in the nucleus. The protein localises to the cytoplasm. In terms of biological role, plays a major role as an activator of AKT family members by inhibiting PPP2CA-mediated dephosphorylation, thereby keeping AKTs activated. Plays a role in preventing motor neuronal death and accelerating the growth of pancreatic beta cells. The protein is BTB/POZ domain-containing protein 10 (BTBD10) of Homo sapiens (Human).